A 315-amino-acid chain; its full sequence is tRNA pseudouridine synthase B (315 aa).

Aspartate 47 (nucleophile) is an active-site residue.

Belongs to the pseudouridine synthase TruB family. Type 1 subfamily.

It carries out the reaction uridine(55) in tRNA = pseudouridine(55) in tRNA. Its function is as follows. Responsible for synthesis of pseudouridine from uracil-55 in the psi GC loop of transfer RNAs. The polypeptide is tRNA pseudouridine synthase B (Shewanella pealeana (strain ATCC 700345 / ANG-SQ1)).